Consider the following 506-residue polypeptide: Cysteine--tRNA ligase (506 aa).

A Zn(2+)-binding site is contributed by Cys34. The 'HIGH' region motif lies at 36-46 (PTVYDFAHIGN). Positions 230, 269, and 273 each coordinate Zn(2+). The short motif at 302 to 306 (KMSKS) is the 'KMSKS' region element. Lys305 lines the ATP pocket.

It belongs to the class-I aminoacyl-tRNA synthetase family. As to quaternary structure, monomer. The cofactor is Zn(2+).

The protein resides in the cytoplasm. It catalyses the reaction tRNA(Cys) + L-cysteine + ATP = L-cysteinyl-tRNA(Cys) + AMP + diphosphate. This Brucella abortus (strain S19) protein is Cysteine--tRNA ligase.